Here is a 289-residue protein sequence, read N- to C-terminus: Acetyl-coenzyme A carboxylase carboxyl transferase subunit beta (289 aa).

Residues 24–289 enclose the CoA carboxyltransferase N-terminal domain; the sequence is LWTNCESCGQ…RQKTVSDAAA (266 aa). Residues cysteine 28, cysteine 31, cysteine 47, and cysteine 50 each coordinate Zn(2+). The C4-type zinc finger occupies 28–50; that stretch reads CESCGQMMLTKELERSEKVCPHC.

It belongs to the AccD/PCCB family. As to quaternary structure, acetyl-CoA carboxylase is a heterohexamer composed of biotin carboxyl carrier protein (AccB), biotin carboxylase (AccC) and two subunits each of ACCase subunit alpha (AccA) and ACCase subunit beta (AccD). It depends on Zn(2+) as a cofactor.

The protein resides in the cytoplasm. It catalyses the reaction N(6)-carboxybiotinyl-L-lysyl-[protein] + acetyl-CoA = N(6)-biotinyl-L-lysyl-[protein] + malonyl-CoA. It participates in lipid metabolism; malonyl-CoA biosynthesis; malonyl-CoA from acetyl-CoA: step 1/1. In terms of biological role, component of the acetyl coenzyme A carboxylase (ACC) complex. Biotin carboxylase (BC) catalyzes the carboxylation of biotin on its carrier protein (BCCP) and then the CO(2) group is transferred by the transcarboxylase to acetyl-CoA to form malonyl-CoA. In Gluconobacter oxydans (strain 621H) (Gluconobacter suboxydans), this protein is Acetyl-coenzyme A carboxylase carboxyl transferase subunit beta.